The primary structure comprises 265 residues: Triosephosphate isomerase (265 aa).

13-15 is a substrate binding site; it reads NWK. H106 functions as the Electrophile in the catalytic mechanism. The active-site Proton acceptor is E179. Substrate is bound by residues G185, S223, and 244–245; that span reads GG.

Belongs to the triosephosphate isomerase family. Homodimer.

The protein resides in the cytoplasm. The catalysed reaction is D-glyceraldehyde 3-phosphate = dihydroxyacetone phosphate. Its pathway is carbohydrate biosynthesis; gluconeogenesis. It participates in carbohydrate degradation; glycolysis; D-glyceraldehyde 3-phosphate from glycerone phosphate: step 1/1. Its function is as follows. Involved in the gluconeogenesis. Catalyzes stereospecifically the conversion of dihydroxyacetone phosphate (DHAP) to D-glyceraldehyde-3-phosphate (G3P). The sequence is that of Triosephosphate isomerase from Acinetobacter baylyi (strain ATCC 33305 / BD413 / ADP1).